An 854-amino-acid polypeptide reads, in one-letter code: DNA topoisomerase 1 type prokaryotic (854 aa).

Residues 2-110 enclose the Toprim domain; that stretch reads SILILLESPG…KRLRFNAITK (109 aa). Positions 8 and 79 each coordinate Mg(2+). A Topo IA-type catalytic domain is found at 124–610; it reads DKNLVDAQKA…DFYDKLKPIV (487 aa). The segment at 158 to 163 is interaction with DNA; that stretch reads SAGRVQ. Y302 (O-(5'-phospho-DNA)-tyrosine intermediate) is an active-site residue. The segment at 802–854 is disordered; sequence KSAPKGGSKTIRKPSQTKYSQTKSTKSTKSTKSTNKKFVGKSAKKTTKKTTKK. The span at 814 to 834 shows a compositional bias: low complexity; sequence KPSQTKYSQTKSTKSTKSTKS. Positions 835–854 are enriched in basic residues; the sequence is TNKKFVGKSAKKTTKKTTKK.

The protein belongs to the type IA topoisomerase family. The cofactor is Mg(2+).

It localises to the virion. The catalysed reaction is ATP-independent breakage of single-stranded DNA, followed by passage and rejoining.. Releases the supercoiling and torsional tension of DNA, which is introduced during the DNA replication and transcription, by transiently cleaving and rejoining one strand of the DNA duplex. Introduces a single-strand break via transesterification at a target site in duplex DNA. The scissile phosphodiester is attacked by the catalytic tyrosine of the enzyme, resulting in the formation of a DNA-(5'-phosphotyrosyl)-enzyme intermediate and the expulsion of a 3'-OH DNA strand. The free DNA strand then undergoes passage around the unbroken strand, thus removing DNA supercoils. Finally, in the religation step, the DNA 3'-OH attacks the covalent intermediate to expel the active-site tyrosine and restore the DNA phosphodiester backbone. This Acanthamoeba polyphaga (Amoeba) protein is DNA topoisomerase 1 type prokaryotic (TOP1P).